Consider the following 208-residue polypeptide: Cytochrome c oxidase assembly protein CtaG (208 aa).

The Cytoplasmic segment spans residues 1-19; it reads MSPPLPQAPQQPAPRRGLG. Residues 20–42 traverse the membrane as a helical; Signal-anchor for type II membrane protein segment; the sequence is HDTAVAAVCGLVVALMVGASFAA. Residues 43-208 lie on the Periplasmic side of the membrane; sequence VPFYNWFCRT…SEPAPRKGNL (166 aa).

It belongs to the COX11/CtaG family.

The protein localises to the cell inner membrane. Its function is as follows. Exerts its effect at some terminal stage of cytochrome c oxidase synthesis, probably by being involved in the insertion of the copper B into subunit I. The chain is Cytochrome c oxidase assembly protein CtaG from Rhodopseudomonas palustris (strain TIE-1).